We begin with the raw amino-acid sequence, 853 residues long: Aminotransferase PigE (853 aa).

Gly-503–Thr-504 contributes to the pyridoxal 5'-phosphate binding site. Lys-645 carries the N6-(pyridoxal phosphate)lysine modification. Thr-680 is a pyridoxal 5'-phosphate binding site.

Belongs to the class-III pyridoxal-phosphate-dependent aminotransferase family. In terms of assembly, homodimer. Requires pyridoxal 5'-phosphate as cofactor.

Its pathway is antibiotic biosynthesis; prodigiosin biosynthesis. Involved in the biosynthesis of 2-methyl-3-n-amyl-pyrrole (MAP), one of the terminal products involved in the biosynthesis of the red antibiotic prodigiosin (Pig). Catalyzes the transamination to the aldehyde group of 3-acetyloctanal, resulting in an aminoketone, which spontaneously cyclizes to yield the dihydro form of MAP (H2MAP). This Serratia sp. (strain ATCC 39006) (Prodigiosinella confusarubida) protein is Aminotransferase PigE.